The sequence spans 1906 residues: Serine protease/ABC transporter B family protein tagB (1906 aa).

An N-terminal signal peptide occupies residues 1–31; it reads MKFQFSSPSKIFLFSSVILILIFIGIKFELL. The disordered stretch occupies residues 96-134; it reads INNNNNNNNKLNNNNNNNNNNNNNNNNNNNNNNNNNNNN. The region spanning 356–763 is the Peptidase S8 domain; the sequence is PTVIFGTKDK…ASSTNPSNAI (408 aa). Residues Asp387 and His432 each act as charge relay system in the active site. Residues Asn594, Asn621, and Asn672 are each glycosylated (N-linked (GlcNAc...) asparagine). Ser695 serves as the catalytic Charge relay system. N-linked (GlcNAc...) asparagine glycosylation is found at Asn747 and Asn823. Helical transmembrane passes span 1011-1031, 1076-1096, and 1121-1141; these read YIII…LMWI, FIIE…ASIL, and FIII…GSWI. One can recognise an ABC transmembrane type-1 domain in the interval 1080 to 1363; that stretch reads LTIATACSLV…LFGVYVSYIQ (284 aa). A glycan (N-linked (GlcNAc...) asparagine) is linked at Asn1172. The next 3 helical transmembrane spans lie at 1210-1230, 1309-1329, and 1332-1352; these read LVFI…AVPI, WLLI…LVIQ, and FTVG…DASS. Positions 1385 to 1455 are disordered; that stretch reads LEEEEADRLA…NNNNNIGNLD (71 aa). The segment covering 1396–1405 has biased composition (gly residues); the sequence is LSGGGGGGGD. Basic and acidic residues predominate over residues 1407 to 1420; that stretch reads GDDKKDKQNIENGK. An ABC transporter domain is found at 1518–1756; it reads IEFKNVSFRY…KGKYYRMFSE (239 aa). The N-linked (GlcNAc...) asparagine glycan is linked to Asn1522. An ATP-binding site is contributed by 1553–1560; it reads GPSGSGKS. N-linked (GlcNAc...) asparagine glycosylation is present at Asn1658. The tract at residues 1757-1906 is disordered; sequence DKDDTPLQNN…QMDEENDEER (150 aa). Low complexity-rich tracts occupy residues 1765 to 1779 and 1814 to 1871; these read NNNN…NNNN and EQQE…DYDQ. A compositionally biased stretch (pro residues) spans 1872–1886; sequence VPPPPPLPSESPSPP.

The protein in the C-terminal section; belongs to the ABC transporter superfamily. ABCB family. Multidrug resistance exporter (TC 3.A.1.201) subfamily. This sequence in the N-terminal section; belongs to the peptidase S8 family.

It localises to the membrane. Functionally, intercellular communication via tagB may mediate integration of cellular differentiation with morphogenesis. This chain is Serine protease/ABC transporter B family protein tagB (tagB), found in Dictyostelium discoideum (Social amoeba).